The chain runs to 98 residues: Alpha-elicitin DRE-alpha (98 aa).

Intrachain disulfides connect Cys3–Cys71, Cys27–Cys56, and Cys51–Cys95.

Belongs to the elicitin family.

The protein localises to the secreted. Induces local and distal defense responses (incompatible hypersensitive reaction) in plants from the solanaceae and cruciferae families. Elicits leaf necrosis and causes the accumulation of pathogenesis-related proteins. Might interact with the lipidic molecules of the plasma membrane. This is Alpha-elicitin DRE-alpha from Phytophthora drechsleri.